Here is a 209-residue protein sequence, read N- to C-terminus: Uracil phosphoribosyltransferase (209 aa).

5-phospho-alpha-D-ribose 1-diphosphate is bound by residues arginine 79, arginine 104, and 131 to 139 (DPMLATGGS). Residues valine 194 and 199–201 (GDA) contribute to the uracil site. 5-phospho-alpha-D-ribose 1-diphosphate is bound at residue aspartate 200.

This sequence belongs to the UPRTase family. Mg(2+) serves as cofactor.

It carries out the reaction UMP + diphosphate = 5-phospho-alpha-D-ribose 1-diphosphate + uracil. It participates in pyrimidine metabolism; UMP biosynthesis via salvage pathway; UMP from uracil: step 1/1. Allosterically activated by GTP. Functionally, catalyzes the conversion of uracil and 5-phospho-alpha-D-ribose 1-diphosphate (PRPP) to UMP and diphosphate. In Bacillus cereus (strain Q1), this protein is Uracil phosphoribosyltransferase.